Here is a 488-residue protein sequence, read N- to C-terminus: MTVLYQNRQIRELERLAVESGISEYELMCRAGEAAFKALLARWPEAQEITVCCGKGNNGGDGLVLARLAYENGLKVTVYLAGQRHQLKGAAAQAANACEASNLPILPFPEPLLFKGEVIVDALLGSGLSGEVKAPYDHLIAAINQAGQYVLALDVPSGINVDSGEVQGTAVKANLTVTFIAPKRGLYTDKAPAYCGELIVDRLGLSESFFRAVFTDTRLLEWKGVFPLLPKRARDAHKGSYGHVLVIGGDYGMGGAVRMAAEAAARVGAGLVTVATRPEHVPIVSGPRPELMCHQVAAADDLKPLLTAATVVVIGPGLGKSDWAKSLLNKVLETDLPKVLDADSLNLLAESPSQREDWILTPHPGEASRLLGISCNEVQRDRFQAINDLQEKYQGVLVLKGVGTLIKDESQAYYVCPAGNPGMATGGMGDILSGIIGGLVAQRLSLASAAQAGVFIHSMAADRAAEEGGERGLLATDLFPHLRVLVNP.

The tract at residues 1–214 (MTVLYQNRQI…LSESFFRAVF (214 aa)) is NAD(P)H-hydrate epimerase. The YjeF N-terminal domain maps to 10–211 (IRELERLAVE…RLGLSESFFR (202 aa)). The interval 57-61 (NNGGD) is NADPHX 1; for epimerase activity. Positions 58 and 121 each coordinate K(+). An NADPHX 1; for epimerase activity region spans residues 125–131 (GSGLSGE). (6S)-NADPHX-binding residues include tyrosine 136 and aspartate 154. Serine 157 contacts K(+). One can recognise a YjeF C-terminal domain in the interval 221 to 488 (EWKGVFPLLP…FPHLRVLVNP (268 aa)). Residues 221 to 488 (EWKGVFPLLP…FPHLRVLVNP (268 aa)) are ADP-dependent (S)-NAD(P)H-hydrate dehydratase. Glycine 317 is a (6S)-NADPHX binding site. Positions 363 to 369 (HPGEASR) are NADPHX 2; for dehydratase activity. ADP contacts are provided by residues 400-404 (KGVGT) and 420-429 (NPGMATGGMG). Residue aspartate 430 coordinates (6S)-NADPHX.

This sequence in the N-terminal section; belongs to the NnrE/AIBP family. The protein in the C-terminal section; belongs to the NnrD/CARKD family. Requires K(+) as cofactor.

It carries out the reaction (6S)-NADHX + ADP = AMP + phosphate + NADH + H(+). The catalysed reaction is (6S)-NADPHX + ADP = AMP + phosphate + NADPH + H(+). The enzyme catalyses (6R)-NADHX = (6S)-NADHX. It catalyses the reaction (6R)-NADPHX = (6S)-NADPHX. Its function is as follows. Bifunctional enzyme that catalyzes the epimerization of the S- and R-forms of NAD(P)HX and the dehydration of the S-form of NAD(P)HX at the expense of ADP, which is converted to AMP. This allows the repair of both epimers of NAD(P)HX, a damaged form of NAD(P)H that is a result of enzymatic or heat-dependent hydration. This is Bifunctional NAD(P)H-hydrate repair enzyme Nnr (nnr) from Coxiella burnetii (strain RSA 493 / Nine Mile phase I).